A 275-amino-acid polypeptide reads, in one-letter code: NH(3)-dependent NAD(+) synthetase (275 aa).

46–53 contributes to the ATP binding site; that stretch reads GISGGQDS. Asp-52 provides a ligand contact to Mg(2+). Residue Arg-140 participates in deamido-NAD(+) binding. Thr-160 provides a ligand contact to ATP. Glu-165 contacts Mg(2+). Deamido-NAD(+) is bound by residues Lys-173 and Asp-180. Positions 189 and 211 each coordinate ATP. 260-261 is a deamido-NAD(+) binding site; it reads HK.

Belongs to the NAD synthetase family. Homodimer.

The catalysed reaction is deamido-NAD(+) + NH4(+) + ATP = AMP + diphosphate + NAD(+) + H(+). It functions in the pathway cofactor biosynthesis; NAD(+) biosynthesis; NAD(+) from deamido-NAD(+) (ammonia route): step 1/1. In terms of biological role, catalyzes the ATP-dependent amidation of deamido-NAD to form NAD. Uses ammonia as a nitrogen source. The sequence is that of NH(3)-dependent NAD(+) synthetase from Erwinia tasmaniensis (strain DSM 17950 / CFBP 7177 / CIP 109463 / NCPPB 4357 / Et1/99).